A 472-amino-acid chain; its full sequence is Flotillin-like protein 6 (472 aa).

Cys-37 is lipidated: S-palmitoyl cysteine. Positions 237–327 (ENQREAEVAQ…ELYKKQKEAE (91 aa)) form a coiled coil.

Belongs to the band 7/mec-2 family. Flotillin subfamily. May be palmitoylated. Very low occasional expression in roots and nodules.

The protein localises to the cell membrane. The protein resides in the membrane. Its subcellular location is the caveola. Functionally, may act as a scaffolding protein within caveolar membranes, functionally participating in formation of caveolae or caveolae-like vesicles. May be involved in nodule formation. The sequence is that of Flotillin-like protein 6 (FLOT6) from Medicago truncatula (Barrel medic).